Here is a 42-residue protein sequence, read N- to C-terminus: Thymosin beta-10 (42 aa).

Composition is skewed to basic and acidic residues over residues methionine 1–glutamate 25 and glutamate 33–lysine 42. A disordered region spans residues methionine 1–lysine 42. An N-acetylalanine modification is found at alanine 2. An N6-acetyllysine modification is found at lysine 4. Serine 12 carries the phosphoserine modification. Position 15 is an N6-acetyllysine (lysine 15). Residues threonine 21, threonine 23, and threonine 34 each carry the phosphothreonine modification. At lysine 39 the chain carries N6-acetyllysine.

This sequence belongs to the thymosin beta family.

The protein localises to the cytoplasm. The protein resides in the cytoskeleton. Its function is as follows. Plays an important role in the organization of the cytoskeleton. Binds to and sequesters actin monomers (G actin) and therefore inhibits actin polymerization. The sequence is that of Thymosin beta-10 (TMSB10) from Sus scrofa (Pig).